Here is a 561-residue protein sequence, read N- to C-terminus: Transmembrane protein 151B (561 aa).

Low complexity predominate over residues 1–10; that stretch reads MSPPGSAAGE. Positions 1–42 are disordered; that stretch reads MSPPGSAAGESAGGGGGGGGSGVPEEPMASADEGPAREEQRP. The span at 11 to 22 shows a compositional bias: gly residues; it reads SAGGGGGGGGSG. The next 2 membrane-spanning stretches (helical) occupy residues 59–79 and 106–126; these read CLLL…CHVT and YVYI…VECW. The segment covering 489–507 has biased composition (polar residues); that stretch reads VNEASCPTEQTRLSSQASM. The tract at residues 489 to 523 is disordered; sequence VNEASCPTEQTRLSSQASMRDNEEDEDEEEAGPPP. The span at 510–519 shows a compositional bias: acidic residues; it reads NEEDEDEEEA.

The protein belongs to the TMEM151 family.

It localises to the membrane. The protein is Transmembrane protein 151B (Tmem151b) of Mus musculus (Mouse).